The primary structure comprises 892 residues: MTDLTLKALAAERQVSVDRLVQQFADAGIRKSADDSVSAQEKQTLLAHLNREAVSGPDKLTLQRKTRSTLNIPGTGGKSKSVQIEVRKKRTFVKRDPQEAERLAAEEQAQREAEEQARREAEEQAKREAQQKAEREAAEQAKREAAEKAKREAAEKDKVSNQQTDDMTKTAQAEKARRENEAAELKRKAEEEARRKLEEEARRVAEEARRMAEENKWTATPEPVEDTSDYHVTTSQHARQAEDENDREVEGGRGRGRNAKAARPAKKGKHAESKADREEARAAVRGGKGGKRKGSSLQQGFQKPAQAVNRDVVIGETITVGELANKMAVKGSQVIKAMMKLGAMVTINQVIDQETAQLVAEEMGHKVILRRENELEEAVMSDRDTGAAAEPRAPVVTIMGHVDHGKTSLLDYIRSTKVASGEAGGITQHIGAYHVETDNGMITFLDTPGHAAFTSMRARGAQATDIVVLVVAADDGVMPQTIEAIQHAKAAGVPVVVAVNKIDKPEADPDRVKNELSQYGILPEEWGGESQFVHVSAKAGTGIDELLDAILLQAEVLELKAVRKGMASGAVIESFLDKGRGPVATVLVREGTLHKGDIVLCGFEYGRVRAMRNELGQEVLEAGPSIPVEILGLSGVPAAGDEVTVVRDEKKAREVALYRQGKFREVKLARQQKSKLENMFANMTEGEVHEVNIVLKADVQGSVEAISDSLLKLSTDEVKVKIIGSGVGGITETDATLAAASNAILVGFNVRADASARKVIEFESLDLRYYSVIYNLIDEVKAAMSGMLSPELKQQIIGLAEVRDVFKSPKFGAIAGCMVTEGTIKRHNPIRVLRDNVVIYEGELESLRRFKDDVNEVRNGMECGIGVKNYNDVRVGDMIEVFEIIEIQRTIA.

Residues Lys-88–Ala-305 are disordered. Composition is skewed to basic and acidic residues over residues Val-93–Val-159 and Asp-166–Lys-216. Residues Gly-254–Lys-269 are compositionally biased toward basic residues. Residues His-270–Ala-282 show a composition bias toward basic and acidic residues. One can recognise a tr-type G domain in the interval Pro-391–Lys-560. The interval Gly-400–Thr-407 is G1. Gly-400–Thr-407 lines the GTP pocket. Residues Gly-425–His-429 are G2. A G3 region spans residues Asp-446–Gly-449. GTP is bound by residues Asp-446–His-450 and Asn-500–Asp-503. The G4 stretch occupies residues Asn-500–Asp-503. Positions Ser-536–Lys-538 are G5.

This sequence belongs to the TRAFAC class translation factor GTPase superfamily. Classic translation factor GTPase family. IF-2 subfamily.

It is found in the cytoplasm. One of the essential components for the initiation of protein synthesis. Protects formylmethionyl-tRNA from spontaneous hydrolysis and promotes its binding to the 30S ribosomal subunits. Also involved in the hydrolysis of GTP during the formation of the 70S ribosomal complex. The chain is Translation initiation factor IF-2 from Salmonella paratyphi A (strain ATCC 9150 / SARB42).